Reading from the N-terminus, the 409-residue chain is MRGEQGAAGARVLQFTNCRILRGGKLLREDLWVRGGRILDPEKLFFEERRVADERRDCGGRILAPGFIDVQINGGFGVDFSQATEDVGSGVALVARRILSHGVTSFCPTLVTSPPEVYHKVVPQIPVKSGGPHGAGVLGLHLEGPFISREKRGAHPEAHLRSFEADAFQDLLATYGPLDNVRIVTLAPELGRSHEVIRALTARGICVSLGHSVADLRAAEDAVWSGATFITHLFNAMLPFHHRDPGIVGLLTSDRLPAGRCIFYGMIADGTHTNPAALRIAHRAHPQGLVLVTDAIPALGLGNGRHTLGQQEVEVDGLTAYVAGTKTLSGSIAPMDVCVRHFLQATGCSMESALEAASLHPAQLLGLEKSKGTLDFGADADFVVLDDSLHVQATYISGELVWQADAARQ.

Glu143 provides a ligand contact to a divalent metal cation. 154–155 provides a ligand contact to substrate; sequence AH. 2 residues coordinate a divalent metal cation: His211 and His232. Substrate is bound by residues 235 to 236, Arg243, and 269 to 272; these read NA and DGTH. The Proton donor/acceptor role is filled by Asp294. 328 to 330 provides a ligand contact to substrate; it reads LSG.

It belongs to the metallo-dependent hydrolases superfamily. NagA family. A divalent metal cation is required as a cofactor.

The enzyme catalyses N-acetyl-D-glucosamine 6-phosphate + H2O = D-glucosamine 6-phosphate + acetate. The protein operates within amino-sugar metabolism; N-acetylneuraminate degradation. Its function is as follows. Hydrolyzes the N-glycolyl group from N-glycolylglucosamine 6-phosphate (GlcNGc-6-P) in the N-glycolylneuraminic acid (Neu5Gc) degradation pathway. Although human is not able to catalyze formation of Neu5Gc due to the inactive CMAHP enzyme, Neu5Gc is present in food and must be degraded. This chain is N-acetylglucosamine-6-phosphate deacetylase (AMDHD2), found in Homo sapiens (Human).